Here is a 493-residue protein sequence, read N- to C-terminus: Cyclin-dependent kinase-like 2 (493 aa).

The Protein kinase domain maps to Tyr4–Phe287. Residues Val10–Val18 and Lys33 contribute to the ATP site. Residues Lys45–Glu51 carry the [NKR]KIAxRE motif. The active-site Proton acceptor is Asp126. Disordered regions lie at residues Val311–Val338 and Gly363–Ser384. A compositionally biased stretch (basic and acidic residues) spans Arg320–Thr336.

Belongs to the protein kinase superfamily. CMGC Ser/Thr protein kinase family. CDC2/CDKX subfamily.

Its subcellular location is the cytoplasm. It is found in the nucleus. It catalyses the reaction L-seryl-[protein] + ATP = O-phospho-L-seryl-[protein] + ADP + H(+). It carries out the reaction L-threonyl-[protein] + ATP = O-phospho-L-threonyl-[protein] + ADP + H(+). The chain is Cyclin-dependent kinase-like 2 from Pongo abelii (Sumatran orangutan).